A 124-amino-acid chain; its full sequence is Insulin growth factor-like family member 4 (124 aa).

The signal sequence occupies residues 1-19 (MVPRISAAIFIFELLGSNS). Residues N57 and N84 are each glycosylated (N-linked (GlcNAc...) asparagine).

This sequence belongs to the IGFL family. Detected in the cerebellum.

The protein resides in the secreted. This Homo sapiens (Human) protein is Insulin growth factor-like family member 4 (IGFL4).